The following is a 567-amino-acid chain: Amino-acid acetyltransferase, mitochondrial (567 aa).

The N-acetyltransferase domain occupies 392–558 (KDSPQTNPLH…ARLKEYAKHI (167 aa)).

It belongs to the acetyltransferase family.

It is found in the mitochondrion. It catalyses the reaction L-glutamate + acetyl-CoA = N-acetyl-L-glutamate + CoA + H(+). Its pathway is amino-acid biosynthesis; L-arginine biosynthesis; N(2)-acetyl-L-ornithine from L-glutamate: step 1/4. In terms of biological role, N-acetylglutamate synthase involved in arginine biosynthesis. This Vanderwaltozyma polyspora (strain ATCC 22028 / DSM 70294 / BCRC 21397 / CBS 2163 / NBRC 10782 / NRRL Y-8283 / UCD 57-17) (Kluyveromyces polysporus) protein is Amino-acid acetyltransferase, mitochondrial (ARG2).